Reading from the N-terminus, the 272-residue chain is Tryptophan synthase alpha chain (272 aa).

Catalysis depends on proton acceptor residues glutamate 49 and glutamate 60.

This sequence belongs to the TrpA family. As to quaternary structure, tetramer of two alpha and two beta chains.

The catalysed reaction is (1S,2R)-1-C-(indol-3-yl)glycerol 3-phosphate + L-serine = D-glyceraldehyde 3-phosphate + L-tryptophan + H2O. Its pathway is amino-acid biosynthesis; L-tryptophan biosynthesis; L-tryptophan from chorismate: step 5/5. Functionally, the alpha subunit is responsible for the aldol cleavage of indoleglycerol phosphate to indole and glyceraldehyde 3-phosphate. This chain is Tryptophan synthase alpha chain, found in Legionella pneumophila (strain Corby).